The chain runs to 383 residues: Chorismate synthase (383 aa).

Residues Arg-39 and Arg-45 each contribute to the NADP(+) site. FMN is bound by residues 127 to 129, 249 to 250, Gly-294, 309 to 313, and Arg-335; these read RAS, QS, and KPIPT.

Belongs to the chorismate synthase family. Homotetramer. Requires FMNH2 as cofactor.

It catalyses the reaction 5-O-(1-carboxyvinyl)-3-phosphoshikimate = chorismate + phosphate. It participates in metabolic intermediate biosynthesis; chorismate biosynthesis; chorismate from D-erythrose 4-phosphate and phosphoenolpyruvate: step 7/7. Its function is as follows. Catalyzes the anti-1,4-elimination of the C-3 phosphate and the C-6 proR hydrogen from 5-enolpyruvylshikimate-3-phosphate (EPSP) to yield chorismate, which is the branch point compound that serves as the starting substrate for the three terminal pathways of aromatic amino acid biosynthesis. This reaction introduces a second double bond into the aromatic ring system. The polypeptide is Chorismate synthase (Caldicellulosiruptor bescii (strain ATCC BAA-1888 / DSM 6725 / KCTC 15123 / Z-1320) (Anaerocellum thermophilum)).